Here is a 665-residue protein sequence, read N- to C-terminus: Protein-arginine deiminase type-2 (665 aa).

Ca(2+)-binding residues include D123, D125, D127, V129, E131, N154, D156, E158, D166, D169, K171, D177, D180, E354, D389, F408, L411, and E412. C647 functions as the Nucleophile in the catalytic mechanism.

The protein belongs to the protein arginine deiminase family. As to quaternary structure, homodimer. Requires Ca(2+) as cofactor. Detected in keratinocytes in epidermis (at protein level).

It localises to the cytoplasm. The catalysed reaction is L-arginyl-[protein] + H2O = L-citrullyl-[protein] + NH4(+). Functionally, catalyzes the deimination of arginine residues of proteins. In Homo sapiens (Human), this protein is Protein-arginine deiminase type-2 (PADI2).